The chain runs to 532 residues: uncharacterized protein (532 aa).

The next 14 membrane-spanning stretches (helical) occupy residues 25 to 45, 65 to 85, 109 to 129, 134 to 154, 179 to 199, 203 to 223, 248 to 268, 302 to 322, 344 to 364, 371 to 391, 392 to 412, 425 to 445, 459 to 479, and 494 to 514; these read ITKI…GDVG, SGFP…NHHT, AVPI…QVAA, LFPF…MLPS, KGAS…AGSL, IILG…RQNE, LLLF…SGGE, VPYI…EKIT, KPVN…QVFS, SLAV…FPAI, AVGA…PRYG, AAVA…DKLR, SAVL…TGRG, and AVFI…LNSV.

The protein belongs to the polysaccharide synthase family.

The protein localises to the cell membrane. This is an uncharacterized protein from Bacillus subtilis (strain 168).